Consider the following 169-residue polypeptide: Putative antitoxin Rv0268c (169 aa).

Residues Met-1 to Gln-11 show a composition bias toward basic residues. The segment at Met-1 to Arg-35 is disordered. Residues Ala-120–Met-153 are a coiled coil.

Belongs to the phD/YefM antitoxin family.

In terms of biological role, putative antitoxin component of a type II toxin-antitoxin (TA) system; however the expected toxin coding sequence is not found adjacent to this gene. The chain is Putative antitoxin Rv0268c from Mycobacterium tuberculosis (strain ATCC 25618 / H37Rv).